The sequence spans 89 residues: Small ribosomal subunit protein uS15 (89 aa).

This sequence belongs to the universal ribosomal protein uS15 family. Part of the 30S ribosomal subunit. Forms a bridge to the 50S subunit in the 70S ribosome, contacting the 23S rRNA.

Its function is as follows. One of the primary rRNA binding proteins, it binds directly to 16S rRNA where it helps nucleate assembly of the platform of the 30S subunit by binding and bridging several RNA helices of the 16S rRNA. Forms an intersubunit bridge (bridge B4) with the 23S rRNA of the 50S subunit in the ribosome. The polypeptide is Small ribosomal subunit protein uS15 (Gloeothece citriformis (strain PCC 7424) (Cyanothece sp. (strain PCC 7424))).